Consider the following 391-residue polypeptide: Aspartate aminotransferase (391 aa).

L-aspartate is bound by residues Gly40 and Asn176. The residue at position 236 (Lys236) is an N6-(pyridoxal phosphate)lysine. Arg366 contacts L-aspartate.

It belongs to the class-I pyridoxal-phosphate-dependent aminotransferase family. Homodimer. Pyridoxal 5'-phosphate serves as cofactor.

The protein localises to the cytoplasm. The catalysed reaction is L-aspartate + 2-oxoglutarate = oxaloacetate + L-glutamate. This is Aspartate aminotransferase (aspC) from Pyrococcus horikoshii (strain ATCC 700860 / DSM 12428 / JCM 9974 / NBRC 100139 / OT-3).